The primary structure comprises 335 residues: Transcription factor IIIA (335 aa).

C2H2-type zinc fingers lie at residues 13–37 (YICS…LCKH), 43–67 (FPCT…SMTH), 73–98 (CKCD…QRAH), 105–129 (YECY…QYIH), 135–159 (FKCN…EKVH), 162–188 (YPCQ…AASH), 192–214 (TICD…KRTH), 221–246 (YKCP…LSFH), and 252–276 (FACG…ANTH). Basic and acidic residues predominate over residues 269-280 (LDRHANTHDPEK). Residues 269-335 (LDRHANTHDP…ATAMQNLSIK (67 aa)) are disordered. A compositionally biased stretch (basic residues) spans 281–292 (KKMKKPRPKKSL).

The protein localises to the nucleus. Involved in ribosomal large subunit biogenesis. Interacts with the internal control region (ICR) of approximately 50 bases within the 5S RNA genes, is required for correct transcription of these genes by RNA polymerase III. Also binds the transcribed 5S RNA's. The protein is Transcription factor IIIA (gtf3a) of Lithobates pipiens (Northern leopard frog).